Consider the following 1576-residue polypeptide: ABC transporter ALT5 (1576 aa).

10 consecutive transmembrane segments (helical) span residues 27–47 (LKFELLFFATIPPAIFLILAV), 72–92 (ILGFVNLVLQVTLLVMTTQGT), 99–119 (GLFLSARIVTTSSTLLSVIVC), 267–287 (LPLSQALAKTLLLPLLLPILP), 289–309 (LVLIGLSISQAFLIQAVTGFL), 321–341 (GLIGATILIYVGIALSTSLYW), 387–407 (VLAGFLNLHELWASLIQAVIV), 417–437 (GFFALPVGLTVACFVALATVG), 500–520 (ITAMTLSLLPELIAPVITLAA), and 525–545 (VATSNIFTIVALISLLTAPLG). One can recognise an ABC transmembrane type-1 1 domain in the interval 289-556 (LVLIGLSISQ…LFQSVAPLMS (268 aa)). One can recognise an ABC transporter 1 domain in the interval 602-834 (FRVVNGSFRW…NGGYLQSLCV (233 aa)). ATP is bound at residue 636-643 (GPVGSGKS). 7 helical membrane passes run 915–935 (VVALVAFLASAICYGFFFAFP), 957–977 (FWVGIYGLFHALSLLGGFLTM), 981–1001 (VTSISLVSGASLHSSIFAAIM), 1035–1054 (LIQFVCDLAISLSMAGVLAA), 1060–1078 (AAMYPIAIALMYATVKLYL), 1142–1162 (WLLFILNIIVMFLAIFVVTLV), and 1171–1191 (GFAGSGLVMLLQFGQILASAM). Positions 919–1199 (VAFLASAICY…AMQSYAKLET (281 aa)) constitute an ABC transmembrane type-1 2 domain. One can recognise an ABC transporter 2 domain in the interval 1236 to 1567 (IKLDGVSASY…SHSKFRALCE (332 aa)). 1278-1285 (GRSGSGKS) contacts ATP.

It belongs to the ABC transporter superfamily. ABCC family. Conjugate transporter (TC 3.A.1.208) subfamily.

The protein resides in the cell membrane. In terms of biological role, ABC transporter that may provide the dual role AAL-toxin export and self-protection by allowing the fungus to evade the harmful effect of its own AAL-toxin production. The protein is ABC transporter ALT5 of Alternaria alternata (Alternaria rot fungus).